The sequence spans 827 residues: Ribosome biogenesis protein ERB1 (827 aa).

Residues Met1–Pro129 form a disordered region. The span at Asp7–Lys18 shows a compositional bias: basic and acidic residues. Acidic residues predominate over residues Cys45 to Val60. Residues Leu61–Ser77 show a composition bias toward low complexity. Composition is skewed to acidic residues over residues Gly81–Ala99 and Glu108–Asp124. The required for interaction with NOP7 stretch occupies residues Arg291–Ser409. Residues Ser409–Pro445 form a required for interaction with YTM1 region. WD repeat units lie at residues Gly461–Lys500, Asn509–Glu549, Lys657–Lys695, Pro698–Lys737, Tyr741–Lys780, and Val796–Thr827.

The protein belongs to the WD repeat BOP1/ERB1 family. Component of the NOP7 complex, composed of ERB1, NOP7 and YTM1. The complex is held together by ERB1, which interacts with NOP7 via its N-terminal domain and with YTM1 via a high-affinity interaction between the seven-bladed beta-propeller domains of the 2 proteins. The NOP7 complex associates with the 66S pre-ribosome.

The protein localises to the nucleus. It is found in the nucleolus. Its subcellular location is the nucleoplasm. Its function is as follows. Component of the NOP7 complex, which is required for maturation of the 25S and 5.8S ribosomal RNAs and formation of the 60S ribosome. The sequence is that of Ribosome biogenesis protein ERB1 from Eremothecium gossypii (strain ATCC 10895 / CBS 109.51 / FGSC 9923 / NRRL Y-1056) (Yeast).